The chain runs to 157 residues: MLPRKVFFTKGVGRHTDPLVSFELALRDAGIEKFNLVTVSSIYPPYCEIVEAEKGLSELFPGQIVFCVMSRMTSNEQGKRIFASVGAAIPPDPSLNGYLTEYHGYCNGEDAGRHAEESAAYMLKTAFEIEPARTFNITVEADVEDCTTVVAAAVFVI.

Ser-41 is modified (pyruvic acid (Ser)).

The protein belongs to the PdaD family. Pyruvate is required as a cofactor.

The enzyme catalyses L-arginine + H(+) = agmatine + CO2. The protein is Pyruvoyl-dependent arginine decarboxylase 1 (pdaD1) of Archaeoglobus fulgidus (strain ATCC 49558 / DSM 4304 / JCM 9628 / NBRC 100126 / VC-16).